Here is a 76-residue protein sequence, read N- to C-terminus: MKLTCVVIVAVLFLTAWTFVTAAPHSSNALENLYLKAHHEMNNPEDSELNKRCYDSGTSCNTGNQCCSGWCIFVCL.

An N-terminal signal peptide occupies residues methionine 1–alanine 22. Residues alanine 23 to arginine 52 constitute a propeptide that is removed on maturation. Intrachain disulfides connect cysteine 53/cysteine 67, cysteine 60/cysteine 71, and cysteine 66/cysteine 75.

It belongs to the conotoxin O1 superfamily. As to expression, expressed by the venom duct.

It localises to the secreted. Functionally, omega-conotoxins act at presynaptic membranes, they bind and block voltage-gated calcium channels (Cav). The chain is Omega-conotoxin-like TxO2 from Conus textile (Cloth-of-gold cone).